A 107-amino-acid polypeptide reads, in one-letter code: Small ribosomal subunit protein uS10 (107 aa).

It belongs to the universal ribosomal protein uS10 family. Part of the 30S ribosomal subunit.

Its function is as follows. Involved in the binding of tRNA to the ribosomes. This is Small ribosomal subunit protein uS10 from Deinococcus deserti (strain DSM 17065 / CIP 109153 / LMG 22923 / VCD115).